Reading from the N-terminus, the 119-residue chain is Spermidine export protein MdtJ (119 aa).

4 consecutive transmembrane segments (helical) span residues 1 to 21 (MIYWILLALAIVSEITGTLAL), 31 to 51 (AGFILMLVMISLSYILLSFSV), 54 to 74 (IALGVAYALWEGVGIVLITLF), and 81 to 101 (ETLTVQKALGLLVLIAGILLI).

It belongs to the drug/metabolite transporter (DMT) superfamily. Small multidrug resistance (SMR) (TC 2.A.7.1) family. MdtJ subfamily. In terms of assembly, forms a complex with MdtI.

The protein localises to the cell inner membrane. Its function is as follows. Catalyzes the excretion of spermidine. In Cronobacter sakazakii (strain ATCC BAA-894) (Enterobacter sakazakii), this protein is Spermidine export protein MdtJ (mdtJ).